We begin with the raw amino-acid sequence, 335 residues long: Glucokinase (335 aa).

11 to 16 (ADIGGT) lines the ATP pocket.

This sequence belongs to the bacterial glucokinase family.

The protein resides in the cytoplasm. The enzyme catalyses D-glucose + ATP = D-glucose 6-phosphate + ADP + H(+). The chain is Glucokinase from Stenotrophomonas maltophilia (strain K279a).